Reading from the N-terminus, the 306-residue chain is Homoserine kinase (306 aa).

95–105 (PHSRGLGSSAA) provides a ligand contact to ATP.

The protein belongs to the GHMP kinase family. Homoserine kinase subfamily.

It localises to the cytoplasm. The enzyme catalyses L-homoserine + ATP = O-phospho-L-homoserine + ADP + H(+). Its pathway is amino-acid biosynthesis; L-threonine biosynthesis; L-threonine from L-aspartate: step 4/5. Its function is as follows. Catalyzes the ATP-dependent phosphorylation of L-homoserine to L-homoserine phosphate. The polypeptide is Homoserine kinase (Mycobacteroides abscessus (strain ATCC 19977 / DSM 44196 / CCUG 20993 / CIP 104536 / JCM 13569 / NCTC 13031 / TMC 1543 / L948) (Mycobacterium abscessus)).